We begin with the raw amino-acid sequence, 476 residues long: Cysteine--tRNA ligase (476 aa).

Residue C36 participates in Zn(2+) binding. The short motif at P38 to N48 is the 'HIGH' region element. Residues C221, H246, and E250 each coordinate Zn(2+). The 'KMSKS' region signature appears at K278–S282. K281 provides a ligand contact to ATP.

This sequence belongs to the class-I aminoacyl-tRNA synthetase family. As to quaternary structure, monomer. Zn(2+) is required as a cofactor.

It is found in the cytoplasm. The enzyme catalyses tRNA(Cys) + L-cysteine + ATP = L-cysteinyl-tRNA(Cys) + AMP + diphosphate. In Chlamydia abortus (strain DSM 27085 / S26/3) (Chlamydophila abortus), this protein is Cysteine--tRNA ligase.